The chain runs to 561 residues: Acylcarnitine hydrolase (561 aa).

Residues 1–26 (MARKQPHSWLNAVLFGLLLILIHVWG) form the signal peptide. Cysteine 97 and cysteine 125 are disulfide-bonded. The Acyl-ester intermediate role is filled by serine 230. Cysteine 282 and cysteine 293 are oxidised to a cystine. Residues glutamate 347 and histidine 459 each act as charge relay system in the active site.

The protein belongs to the type-B carboxylesterase/lipase family. In terms of tissue distribution, expressed in liver, stomach and kidney.

It is found in the microsome. The protein localises to the endoplasmic reticulum. The enzyme catalyses all-trans-retinyl hexadecanoate + H2O = all-trans-retinol + hexadecanoate + H(+). It catalyses the reaction an O-acyl-(R)-carnitine + H2O = (R)-carnitine + a fatty acid + H(+). Hydrolase with high activity towards palmitoylcarnitine. Is also active with p-nitrophenylacetate and alpha-naphthylacetate. May also hydrolyze retinyl esters. The sequence is that of Acylcarnitine hydrolase from Rattus norvegicus (Rat).